The chain runs to 198 residues: Molybdenum cofactor guanylyltransferase (198 aa).

Residues 14–16 (LAG), K27, D73, and D103 contribute to the GTP site. Position 103 (D103) interacts with Mg(2+).

This sequence belongs to the MobA family. In terms of assembly, monomer. It depends on Mg(2+) as a cofactor.

It is found in the cytoplasm. The enzyme catalyses Mo-molybdopterin + GTP + H(+) = Mo-molybdopterin guanine dinucleotide + diphosphate. Its function is as follows. Transfers a GMP moiety from GTP to Mo-molybdopterin (Mo-MPT) cofactor (Moco or molybdenum cofactor) to form Mo-molybdopterin guanine dinucleotide (Mo-MGD) cofactor. This is Molybdenum cofactor guanylyltransferase from Pseudomonas aeruginosa (strain LESB58).